The chain runs to 639 residues: tRNA uridine 5-carboxymethylaminomethyl modification enzyme MnmG (639 aa).

13-18 (GGGHAG) is an FAD binding site. 274-288 (GPRYCPSIEDKIHRF) lines the NAD(+) pocket.

This sequence belongs to the MnmG family. In terms of assembly, homodimer. Heterotetramer of two MnmE and two MnmG subunits. FAD serves as cofactor.

Its subcellular location is the cytoplasm. Functionally, NAD-binding protein involved in the addition of a carboxymethylaminomethyl (cmnm) group at the wobble position (U34) of certain tRNAs, forming tRNA-cmnm(5)s(2)U34. The chain is tRNA uridine 5-carboxymethylaminomethyl modification enzyme MnmG from Polynucleobacter asymbioticus (strain DSM 18221 / CIP 109841 / QLW-P1DMWA-1) (Polynucleobacter necessarius subsp. asymbioticus).